A 154-amino-acid chain; its full sequence is Cyanate hydratase (154 aa).

Catalysis depends on residues Arg100, Glu103, and Ser126.

It belongs to the cyanase family.

It catalyses the reaction cyanate + hydrogencarbonate + 3 H(+) = NH4(+) + 2 CO2. Catalyzes the reaction of cyanate with bicarbonate to produce ammonia and carbon dioxide. The protein is Cyanate hydratase of Aspergillus terreus (strain NIH 2624 / FGSC A1156).